The sequence spans 65 residues: Large ribosomal subunit protein bL35 (65 aa).

The interval 23-44 (KRMKAGKQHILTKKSQKTKRNL) is disordered.

The protein belongs to the bacterial ribosomal protein bL35 family.

The polypeptide is Large ribosomal subunit protein bL35 (Lachnoclostridium phytofermentans (strain ATCC 700394 / DSM 18823 / ISDg) (Clostridium phytofermentans)).